The chain runs to 294 residues: Cyclin-G1 (294 aa).

This sequence belongs to the cyclin family. Cyclin G subfamily. As to quaternary structure, binds to B' regulatory B subunits of protein phosphatase A (PP2A) following induction by p53 (in vitro). In terms of tissue distribution, highest levels in kidney, heart and skeletal muscle.

The protein localises to the nucleus. Functionally, may play a role in growth regulation. Is associated with G2/M phase arrest in response to DNA damage. May be an intermediate by which p53 mediates its role as an inhibitor of cellular proliferation. This chain is Cyclin-G1 (Ccng1), found in Mus musculus (Mouse).